Reading from the N-terminus, the 528-residue chain is FAD-dependent monooxygenase DEP2 (528 aa).

Residues 1–23 (MEDGRSTFKVIIIGAGVTGLTLA) form the signal peptide. FAD-binding residues include Asp37, Arg110, Asp311, and Gly324. Residues 479–499 (VFPQILGVLMVMWSSVWLFHL) traverse the membrane as a helical segment. The N-linked (GlcNAc...) asparagine glycan is linked to Asn521.

Belongs to the paxM FAD-dependent monooxygenase family. FAD is required as a cofactor.

The protein resides in the membrane. It participates in polyketide biosynthesis. FAD-dependent monooxygenase; part of the gene cluster that mediates the biosynthesis of depudecin, a highly oxidized eleven-carbon linear polyketide that acts as a histone deacetylase (HDAC) inhibitor and makes a small contribution to pathogenesis. The reducing polyketide synthase DEP5 is the central enzyme in depudecin biosynthesis by yielding the backbone polyketide chain. The monooxygenases DEP2 and DEP4, as well as the uncharacterized protein DEP1, then act as tailoring enzymes to modify the intermediate polyketide chain into depudecin. The polypeptide is FAD-dependent monooxygenase DEP2 (Alternaria brassicicola (Dark leaf spot agent)).